Here is a 338-residue protein sequence, read N- to C-terminus: Glycerol-3-phosphate dehydrogenase [NAD(P)+] (338 aa).

Residues Ser14, Tyr15, His35, and Lys109 each contribute to the NADPH site. Positions 109, 138, and 140 each coordinate sn-glycerol 3-phosphate. Ala142 contacts NADPH. Residues Lys194, Asp247, Ser257, Arg258, and Asn259 each coordinate sn-glycerol 3-phosphate. The active-site Proton acceptor is the Lys194. Arg258 provides a ligand contact to NADPH. NADPH is bound by residues Val282 and Glu284.

This sequence belongs to the NAD-dependent glycerol-3-phosphate dehydrogenase family.

It is found in the cytoplasm. It catalyses the reaction sn-glycerol 3-phosphate + NAD(+) = dihydroxyacetone phosphate + NADH + H(+). It carries out the reaction sn-glycerol 3-phosphate + NADP(+) = dihydroxyacetone phosphate + NADPH + H(+). It functions in the pathway membrane lipid metabolism; glycerophospholipid metabolism. Functionally, catalyzes the reduction of the glycolytic intermediate dihydroxyacetone phosphate (DHAP) to sn-glycerol 3-phosphate (G3P), the key precursor for phospholipid synthesis. The sequence is that of Glycerol-3-phosphate dehydrogenase [NAD(P)+] from Shewanella frigidimarina (strain NCIMB 400).